A 102-amino-acid polypeptide reads, in one-letter code: Large ribosomal subunit protein bL21 (102 aa).

The span at 79 to 91 shows a compositional bias: basic residues; sequence RKDSKRKKGHRQP. Residues 79–102 form a disordered region; it reads RKDSKRKKGHRQPYTKLTIDKINA.

The protein belongs to the bacterial ribosomal protein bL21 family. As to quaternary structure, part of the 50S ribosomal subunit. Contacts protein L20.

In terms of biological role, this protein binds to 23S rRNA in the presence of protein L20. This is Large ribosomal subunit protein bL21 from Staphylococcus saprophyticus subsp. saprophyticus (strain ATCC 15305 / DSM 20229 / NCIMB 8711 / NCTC 7292 / S-41).